A 66-amino-acid chain; its full sequence is Sec-independent protein translocase protein TatA (66 aa).

A helical membrane pass occupies residues Met-1–Phe-21. Residues Arg-45–Lys-66 are disordered.

Belongs to the TatA/E family. In terms of assembly, the Tat system comprises two distinct complexes: a TatABC complex, containing multiple copies of TatA, TatB and TatC subunits, and a separate TatA complex, containing only TatA subunits. Substrates initially bind to the TatABC complex, which probably triggers association of the separate TatA complex to form the active translocon.

The protein localises to the cell inner membrane. Part of the twin-arginine translocation (Tat) system that transports large folded proteins containing a characteristic twin-arginine motif in their signal peptide across membranes. TatA could form the protein-conducting channel of the Tat system. The sequence is that of Sec-independent protein translocase protein TatA from Desulforapulum autotrophicum (strain ATCC 43914 / DSM 3382 / VKM B-1955 / HRM2) (Desulfobacterium autotrophicum).